Reading from the N-terminus, the 440-residue chain is C4-dicarboxylate transport protein (440 aa).

A run of 9 helical transmembrane segments spans residues 15–35, 46–66, 78–98, 146–166, 190–210, 224–244, 291–311, 332–352, and 354–374; these read VLVA…TGVA, LIKM…IAGM, YALL…LVVV, AFAN…GFAL, IINM…AFTI, LMAC…GGIC, VVGL…SIYL, ITLL…TGSG, and IVLA…LALI. Positions 420-440 are disordered; it reads GAPLVDTRPTDDLGVAEGPAR.

Belongs to the dicarboxylate/amino acid:cation symporter (DAACS) (TC 2.A.23) family.

It localises to the cell inner membrane. Its function is as follows. Responsible for the transport of dicarboxylates such as succinate, fumarate, and malate from the periplasm across the membrane. This is C4-dicarboxylate transport protein from Pseudomonas putida (strain ATCC 700007 / DSM 6899 / JCM 31910 / BCRC 17059 / LMG 24140 / F1).